Reading from the N-terminus, the 190-residue chain is Potassium-transporting ATPase KdpC subunit (190 aa).

A helical transmembrane segment spans residues 10 to 30; that stretch reads VLFAVLTLICGVIYPYAITGI.

The protein belongs to the KdpC family. As to quaternary structure, the system is composed of three essential subunits: KdpA, KdpB and KdpC.

Its subcellular location is the cell inner membrane. Functionally, part of the high-affinity ATP-driven potassium transport (or Kdp) system, which catalyzes the hydrolysis of ATP coupled with the electrogenic transport of potassium into the cytoplasm. This subunit acts as a catalytic chaperone that increases the ATP-binding affinity of the ATP-hydrolyzing subunit KdpB by the formation of a transient KdpB/KdpC/ATP ternary complex. This is Potassium-transporting ATPase KdpC subunit from Herminiimonas arsenicoxydans.